The primary structure comprises 220 residues: MRTELTPIEARVIGCLIEKEVTTPDQYPLSLNALTNACNQKSNREPVMSLSESEVLDAVDQLISRRLVSDESGFNSRVSKYQHRFCNTEFGDLKLSAQEKGIVCCMLLRGPQTPGELRTRTNRLATFADVKEVETVLDKLASEERGQLVVKLPIEPGKRESRYMHQFCGEVDLDAFQGSALMTASSTPQFDDERVAHLEAEVEALKQELAELKSLVNSLL.

This sequence belongs to the UPF0502 family.

The chain is UPF0502 protein VV2_0756 from Vibrio vulnificus (strain CMCP6).